A 55-amino-acid polypeptide reads, in one-letter code: Large ribosomal subunit protein bL33 (55 aa).

This sequence belongs to the bacterial ribosomal protein bL33 family.

This chain is Large ribosomal subunit protein bL33, found in Rhizobium meliloti (strain 1021) (Ensifer meliloti).